We begin with the raw amino-acid sequence, 600 residues long: Xylulose kinase (600 aa).

Substrate is bound at residue 79-82; it reads WLEA. Position 244 is a phosphoserine (Ser-244). Residue Asp-299 participates in substrate binding. ATP contacts are provided by residues Gly-358 and 505-509; that span reads GASKN.

This sequence belongs to the FGGY kinase family.

The protein localises to the cytoplasm. The catalysed reaction is D-xylulose + ATP = D-xylulose 5-phosphate + ADP + H(+). In terms of biological role, xylulose kinase necessary for growth in culture media with D-xylulose as the solecarbon source. In Saccharomyces cerevisiae (strain ATCC 204508 / S288c) (Baker's yeast), this protein is Xylulose kinase.